A 76-amino-acid polypeptide reads, in one-letter code: ATP synthase subunit 9, mitochondrial (76 aa).

2 consecutive transmembrane segments (helical) span residues 14 to 34 and 52 to 72; these read IATIGLLGAGIGIAIVFAALI and ILGFALSEATGLFCLMISFLL.

It belongs to the ATPase C chain family. As to quaternary structure, F-type ATPases have 2 components, CF(1) - the catalytic core - and CF(0) - the membrane proton channel. CF(1) has five subunits: alpha(3), beta(3), gamma(1), delta(1), epsilon(1). CF(0) has three main subunits: a, b and c.

Its subcellular location is the mitochondrion membrane. Its function is as follows. Mitochondrial membrane ATP synthase (F(1)F(0) ATP synthase or Complex V) produces ATP from ADP in the presence of a proton gradient across the membrane which is generated by electron transport complexes of the respiratory chain. F-type ATPases consist of two structural domains, F(1) - containing the extramembraneous catalytic core and F(0) - containing the membrane proton channel, linked together by a central stalk and a peripheral stalk. During catalysis, ATP synthesis in the catalytic domain of F(1) is coupled via a rotary mechanism of the central stalk subunits to proton translocation. Part of the complex F(0) domain. A homomeric c-ring of probably 10 subunits is part of the complex rotary element. The chain is ATP synthase subunit 9, mitochondrial (ATP9) from Wickerhamomyces canadensis (Yeast).